A 251-amino-acid polypeptide reads, in one-letter code: 1-(5-phosphoribosyl)-5-[(5-phosphoribosylamino)methylideneamino] imidazole-4-carboxamide isomerase (251 aa).

Catalysis depends on Asp8, which acts as the Proton acceptor. The active-site Proton donor is the Asp131.

This sequence belongs to the HisA/HisF family.

It localises to the cytoplasm. It catalyses the reaction 1-(5-phospho-beta-D-ribosyl)-5-[(5-phospho-beta-D-ribosylamino)methylideneamino]imidazole-4-carboxamide = 5-[(5-phospho-1-deoxy-D-ribulos-1-ylimino)methylamino]-1-(5-phospho-beta-D-ribosyl)imidazole-4-carboxamide. Its pathway is amino-acid biosynthesis; L-histidine biosynthesis; L-histidine from 5-phospho-alpha-D-ribose 1-diphosphate: step 4/9. The protein is 1-(5-phosphoribosyl)-5-[(5-phosphoribosylamino)methylideneamino] imidazole-4-carboxamide isomerase of Burkholderia vietnamiensis (strain G4 / LMG 22486) (Burkholderia cepacia (strain R1808)).